We begin with the raw amino-acid sequence, 604 residues long: Glutamyl-tRNA(Gln) amidotransferase subunit B, mitochondrial (604 aa).

The N-terminal 48 residues, 1–48 (MIRQCLSRRGAYSRYRLAARGVELAEPFHHQSSRPQGRRNWSSSPRCS), are a transit peptide targeting the mitochondrion. Residues 28–57 (FHHQSSRPQGRRNWSSSPRCSLDIRTDTPR) are disordered. Residues 33 to 46 (SRPQGRRNWSSSPR) are compositionally biased toward polar residues.

This sequence belongs to the GatB/GatE family. GatB subfamily. Subunit of the heterotrimeric GatCAB amidotransferase (AdT) complex, composed of A, B and C subunits.

The protein localises to the mitochondrion. It catalyses the reaction L-glutamyl-tRNA(Gln) + L-glutamine + ATP + H2O = L-glutaminyl-tRNA(Gln) + L-glutamate + ADP + phosphate + H(+). Allows the formation of correctly charged Gln-tRNA(Gln) through the transamidation of misacylated Glu-tRNA(Gln) in the mitochondria. The reaction takes place in the presence of glutamine and ATP through an activated gamma-phospho-Glu-tRNA(Gln). In Blastomyces gilchristii (strain SLH14081) (Blastomyces dermatitidis), this protein is Glutamyl-tRNA(Gln) amidotransferase subunit B, mitochondrial.